The following is a 431-amino-acid chain: Levansucrase LscB (431 aa).

5 residues coordinate sucrose: Trp-61, Asp-62, Ala-148, Arg-218, and Asp-219. The active-site Nucleophile is Asp-62. Glu-303 functions as the Proton donor/acceptor in the catalytic mechanism.

The protein belongs to the glycosyl hydrolase 68 family.

It is found in the secreted. It catalyses the reaction [6)-beta-D-fructofuranosyl-(2-&gt;](n) alpha-D-glucopyranoside + sucrose = [6)-beta-D-fructofuranosyl-(2-&gt;](n+1) alpha-D-glucopyranoside + D-glucose. Functionally, catalyzes the synthesis of levan, a fructose polymer, by transferring the fructosyl moiety from sucrose to a growing acceptor molecule. The sequence is that of Levansucrase LscB from Pseudomonas savastanoi pv. glycinea (Pseudomonas syringae pv. glycinea).